A 419-amino-acid polypeptide reads, in one-letter code: S-adenosylmethionine synthase (419 aa).

Position 14 (histidine 14) interacts with ATP. Residue aspartate 16 coordinates Mg(2+). Glutamate 42 lines the K(+) pocket. L-methionine contacts are provided by glutamate 55 and glutamine 98. Residues 98-108 (QSQDIYQGVDR) form a flexible loop region. ATP contacts are provided by residues 164 to 166 (DSK), 242 to 243 (KF), aspartate 251, 257 to 258 (RK), alanine 274, and lysine 278. Position 251 (aspartate 251) interacts with L-methionine. Lysine 282 contributes to the L-methionine binding site.

It belongs to the AdoMet synthase family. Homotetramer; dimer of dimers. The cofactor is Mg(2+). It depends on K(+) as a cofactor.

It is found in the cytoplasm. It catalyses the reaction L-methionine + ATP + H2O = S-adenosyl-L-methionine + phosphate + diphosphate. It functions in the pathway amino-acid biosynthesis; S-adenosyl-L-methionine biosynthesis; S-adenosyl-L-methionine from L-methionine: step 1/1. Catalyzes the formation of S-adenosylmethionine (AdoMet) from methionine and ATP. The overall synthetic reaction is composed of two sequential steps, AdoMet formation and the subsequent tripolyphosphate hydrolysis which occurs prior to release of AdoMet from the enzyme. This is S-adenosylmethionine synthase from Christiangramia forsetii (strain DSM 17595 / CGMCC 1.15422 / KT0803) (Gramella forsetii).